The primary structure comprises 228 residues: Derlin-3 (228 aa).

Residues 1–22 (MAGQRLAAGFLQVPAVTRAYTA) are Cytoplasmic-facing. A helical membrane pass occupies residues 23–43 (ACVLTTAAVQLELLSPFQLYF). At 44-57 (NPHLVFRKFQVWRL) the chain is on the lumenal side. Residues 58–78 (ITTFLFFGPLGFGFFFNMLFV) traverse the membrane as a helical segment. Residues 79–98 (FRYCRMLEEGSFRGRKADFV) lie on the Cytoplasmic side of the membrane. The chain crosses the membrane as a helical span at residues 99–119 (FMFLFGGVLMTLLGFLGSLFF). Over 120 to 168 (LGQALMAMLVYVWSRRSPHVRVNFFGLLNFQAPFLPWALMGFSLLLGNS) the chain is Lumenal. The helical transmembrane segment at 169–189 (VVTDLLGILVGHIYYFLEDVF) threads the bilayer. At 190–228 (PNQPGGKRLLLTPSVLKLLLDDPQEDPDYLPLPEEQPEL) the chain is on the cytoplasmic side.

Belongs to the derlin family. In terms of assembly, forms homo- and heterooligomers with DERL2 and, to a lesser extent, with DERL1. Interacts with VCP and EDEM1. Interacts with SELENOK and SELENOS. Interacts with the signal recognition particle/SRP and the SRP receptor; in the process of endoplasmic reticulum stress-induced pre-emptive quality control. As to expression, highly expressed in spleen, lung, liver, spleen and testis. Expressed at intermediate level in kidney. Weakly or not expressed in brain, heart and skeletal muscle.

Its subcellular location is the endoplasmic reticulum membrane. Functional component of endoplasmic reticulum-associated degradation (ERAD) for misfolded lumenal glycoproteins, but not that of misfolded nonglycoproteins. May act by forming a channel that allows the retrotranslocation of misfolded glycoproteins into the cytosol where they are ubiquitinated and degraded by the proteasome. May mediate the interaction between VCP and the misfolded glycoproteins. May be involved in endoplasmic reticulum stress-induced pre-emptive quality control, a mechanism that selectively attenuates the translocation of newly synthesized proteins into the endoplasmic reticulum and reroutes them to the cytosol for proteasomal degradation. This chain is Derlin-3, found in Mus musculus (Mouse).